Reading from the N-terminus, the 132-residue chain is MTMTDPIADMLTRLRNANSAYHDSVVMPHSKIKSHIAEILQQEGFITGWKVEDAEVGKNLVLELKFGPNRERSIAGIKRISKPGLRVYAKSTNLPKVLGGLGVAIISTSHGLLTGQQAGKKGVGGEVLAYVW.

It belongs to the universal ribosomal protein uS8 family. Part of the 30S ribosomal subunit. Contacts proteins S5 and S12.

One of the primary rRNA binding proteins, it binds directly to 16S rRNA central domain where it helps coordinate assembly of the platform of the 30S subunit. The protein is Small ribosomal subunit protein uS8 of Streptomyces griseus subsp. griseus (strain JCM 4626 / CBS 651.72 / NBRC 13350 / KCC S-0626 / ISP 5235).